Reading from the N-terminus, the 692-residue chain is Methionine--tRNA ligase (692 aa).

The short motif at 26-36 (PYANGSIHLGH) is the 'HIGH' region element. Zn(2+)-binding residues include C157, C160, C170, and C173. The 'KMSKS' region motif lies at 342–346 (KMSKS). K345 contributes to the ATP binding site. Residues 590-692 (DFAKVDLRIA…SGAQPGMRVK (103 aa)) form the tRNA-binding domain.

It belongs to the class-I aminoacyl-tRNA synthetase family. MetG type 1 subfamily. In terms of assembly, homodimer. The cofactor is Zn(2+).

The protein resides in the cytoplasm. It catalyses the reaction tRNA(Met) + L-methionine + ATP = L-methionyl-tRNA(Met) + AMP + diphosphate. Is required not only for elongation of protein synthesis but also for the initiation of all mRNA translation through initiator tRNA(fMet) aminoacylation. This chain is Methionine--tRNA ligase, found in Methylobacillus flagellatus (strain ATCC 51484 / DSM 6875 / VKM B-1610 / KT).